The following is a 156-amino-acid chain: MKSLQKGFTLIELMIVVAIIGILAAIAIPQYQNYIARSQVSRVMSETGQMRTAIETCLLDGKEGKDCFIGWTTSNLLAAAGGSTTNNATAADPGQGGLNITYALESTAENKIEATFGQNAAATLHGKKLTWTRSPEATWSCSTDVDEKFKPTGCKK.

A propeptide spans 1–7 (MKSLQKG) (leader sequence). Phe-8 is subject to N-methylphenylalanine. The helical transmembrane segment at 8–28 (FTLIELMIVVAIIGILAAIAI) threads the bilayer. 2 disulfides stabilise this stretch: Cys-57–Cys-67 and Cys-141–Cys-154.

Belongs to the N-Me-Phe pilin family. In terms of assembly, the pili are polar flexible filaments of about 5.4 nanometers diameter and 2.5 micrometers average length; they consist of only a single polypeptide chain arranged in a helical configuration of five subunits per turn in the assembled pilus.

It is found in the fimbrium. The protein resides in the membrane. Major component of the type IV fimbriae that plays an essential role in twitching motility, natural transformation, and protease secretion. The polypeptide is Type IV major fimbrial protein FimA (fimA) (Dichelobacter nodosus (Bacteroides nodosus)).